The chain runs to 901 residues: Protein translocase subunit SecA (901 aa).

Residues Gln-87, 105-109 (GEGKT), and Asp-512 each bind ATP. Residues Cys-885, Cys-887, Cys-896, and His-897 each contribute to the Zn(2+) site.

Belongs to the SecA family. In terms of assembly, monomer and homodimer. Part of the essential Sec protein translocation apparatus which comprises SecA, SecYEG and auxiliary proteins SecDF-YajC and YidC. It depends on Zn(2+) as a cofactor.

Its subcellular location is the cell inner membrane. The protein localises to the cytoplasm. It catalyses the reaction ATP + H2O + cellular proteinSide 1 = ADP + phosphate + cellular proteinSide 2.. Part of the Sec protein translocase complex. Interacts with the SecYEG preprotein conducting channel. Has a central role in coupling the hydrolysis of ATP to the transfer of proteins into and across the cell membrane, serving both as a receptor for the preprotein-SecB complex and as an ATP-driven molecular motor driving the stepwise translocation of polypeptide chains across the membrane. This is Protein translocase subunit SecA from Salmonella paratyphi A (strain ATCC 9150 / SARB42).